A 406-amino-acid chain; its full sequence is Argininosuccinate synthase (406 aa).

8–16 (AYSGGLDTT) lines the ATP pocket. L-citrulline contacts are provided by Tyr86 and Ser91. Gly116 lines the ATP pocket. L-aspartate contacts are provided by Thr118, Asn122, and Asp123. An L-citrulline-binding site is contributed by Asn122. 5 residues coordinate L-citrulline: Arg126, Ser175, Ser184, Glu261, and Tyr273.

Belongs to the argininosuccinate synthase family. Type 1 subfamily. As to quaternary structure, homotetramer.

Its subcellular location is the cytoplasm. It carries out the reaction L-citrulline + L-aspartate + ATP = 2-(N(omega)-L-arginino)succinate + AMP + diphosphate + H(+). It participates in amino-acid biosynthesis; L-arginine biosynthesis; L-arginine from L-ornithine and carbamoyl phosphate: step 2/3. This Brachyspira hyodysenteriae (strain ATCC 49526 / WA1) protein is Argininosuccinate synthase.